The chain runs to 173 residues: uncharacterized protein (173 aa).

An MSP domain is found at 16–133 (DLVLRPETIT…KHVLIRFPNK (118 aa)). The segment covering 141–163 (KKMEEDDMKQQKERNKLSNEKMG) has biased composition (basic and acidic residues). Positions 141–173 (KKMEEDDMKQQKERNKLSNEKMGIRNQNMGEKK) are disordered.

This is an uncharacterized protein from Caenorhabditis elegans.